The following is a 349-amino-acid chain: Quinone oxidoreductase-like protein 1 (349 aa).

The protein belongs to the zinc-containing alcohol dehydrogenase family. Quinone oxidoreductase subfamily. Homodimer. Component of the FERRY complex composed of five subunits, TBCK, PPP1R21, FERRY3, CRYZL1 and GATD1 with a ratio of 1:2:1:2:4, respectively. In terms of tissue distribution, ubiquitous.

It localises to the early endosome. Its function is as follows. Component of the FERRY complex (Five-subunit Endosomal Rab5 and RNA/ribosome intermediary). The FERRY complex directly interacts with mRNAs and RAB5A, and functions as a RAB5A effector involved in the localization and the distribution of specific mRNAs most likely by mediating their endosomal transport. The complex recruits mRNAs and ribosomes to early endosomes through direct mRNA-interaction. This Homo sapiens (Human) protein is Quinone oxidoreductase-like protein 1 (CRYZL1).